We begin with the raw amino-acid sequence, 319 residues long: Acetyl-coenzyme A carboxylase carboxyl transferase subunit alpha (319 aa).

The CoA carboxyltransferase C-terminal domain occupies 35-292; that stretch reads EISKLMRRLV…KKTIAEALAE (258 aa).

Belongs to the AccA family. As to quaternary structure, acetyl-CoA carboxylase is a heterohexamer composed of biotin carboxyl carrier protein (AccB), biotin carboxylase (AccC) and two subunits each of ACCase subunit alpha (AccA) and ACCase subunit beta (AccD).

Its subcellular location is the cytoplasm. The catalysed reaction is N(6)-carboxybiotinyl-L-lysyl-[protein] + acetyl-CoA = N(6)-biotinyl-L-lysyl-[protein] + malonyl-CoA. Its pathway is lipid metabolism; malonyl-CoA biosynthesis; malonyl-CoA from acetyl-CoA: step 1/1. Functionally, component of the acetyl coenzyme A carboxylase (ACC) complex. First, biotin carboxylase catalyzes the carboxylation of biotin on its carrier protein (BCCP) and then the CO(2) group is transferred by the carboxyltransferase to acetyl-CoA to form malonyl-CoA. This chain is Acetyl-coenzyme A carboxylase carboxyl transferase subunit alpha, found in Desulfitobacterium hafniense (strain DSM 10664 / DCB-2).